The sequence spans 53 residues: Small, acid-soluble spore protein O (53 aa).

The segment at M1–Q53 is disordered.

This sequence belongs to the SspO family.

It localises to the spore core. This Halalkalibacterium halodurans (strain ATCC BAA-125 / DSM 18197 / FERM 7344 / JCM 9153 / C-125) (Bacillus halodurans) protein is Small, acid-soluble spore protein O.